The chain runs to 404 residues: Spore germination protein YndF (404 aa).

The signal sequence occupies residues 1 to 24; that stretch reads MKSKLKRQLPAMVIVCLLMICVTG. A lipid anchor (N-palmitoyl cysteine) is attached at cysteine 25. Cysteine 25 is lipidated: S-diacylglycerol cysteine.

This sequence belongs to the GerABKC lipoprotein family.

Its subcellular location is the cell membrane. Its function is as follows. May be involved in spore germination. The polypeptide is Spore germination protein YndF (yndF) (Bacillus subtilis (strain 168)).